The sequence spans 184 residues: Probable gluconokinase (184 aa).

Position 11 to 18 (11 to 18) interacts with ATP; sequence GVSGSGKS.

It belongs to the gluconokinase GntK/GntV family.

It catalyses the reaction D-gluconate + ATP = 6-phospho-D-gluconate + ADP + H(+). Its pathway is carbohydrate acid metabolism; D-gluconate degradation. This Mus musculus (Mouse) protein is Probable gluconokinase (Idnk).